The primary structure comprises 490 residues: Betaine aldehyde dehydrogenase (490 aa).

Residues Ser26, Ile27, and Asp93 each contribute to the K(+) site. Residue Gly150–Trp152 participates in NAD(+) binding. The active-site Charge relay system is the Lys162. NAD(+) is bound by residues Lys176–Glu179 and Gly230–Thr233. Leu246 contacts K(+). Glu252 acts as the Proton acceptor in catalysis. 3 residues coordinate NAD(+): Gly254, Cys286, and Glu387. Cys286 functions as the Nucleophile in the catalytic mechanism. Cysteine sulfenic acid (-SOH) is present on Cys286. Residues Lys457 and Gly460 each coordinate K(+). The active-site Charge relay system is the Glu464.

Belongs to the aldehyde dehydrogenase family. As to quaternary structure, dimer of dimers. It depends on K(+) as a cofactor.

The enzyme catalyses betaine aldehyde + NAD(+) + H2O = glycine betaine + NADH + 2 H(+). It functions in the pathway amine and polyamine biosynthesis; betaine biosynthesis via choline pathway; betaine from betaine aldehyde: step 1/1. Functionally, involved in the biosynthesis of the osmoprotectant glycine betaine. Catalyzes the irreversible oxidation of betaine aldehyde to the corresponding acid. In Acinetobacter baumannii (strain SDF), this protein is Betaine aldehyde dehydrogenase.